The primary structure comprises 216 residues: Probable GTP-binding protein EngB (216 aa).

The EngB-type G domain maps to 24–205 (ATPEIAFVGR…WARLAALAAE (182 aa)). Residues 32–39 (GRSNVGKS), 59–63 (GRTRA), 86–89 (DLPG), 153–156 (TKTD), and 184–186 (FSA) each bind GTP. 2 residues coordinate Mg(2+): Ser-39 and Thr-61.

This sequence belongs to the TRAFAC class TrmE-Era-EngA-EngB-Septin-like GTPase superfamily. EngB GTPase family. The cofactor is Mg(2+).

Functionally, necessary for normal cell division and for the maintenance of normal septation. The chain is Probable GTP-binding protein EngB from Anaeromyxobacter dehalogenans (strain 2CP-1 / ATCC BAA-258).